A 396-amino-acid chain; its full sequence is Succinyl-diaminopimelate desuccinylase (396 aa).

H74 contacts Zn(2+). Residue D76 is part of the active site. Position 107 (D107) interacts with Zn(2+). E142 functions as the Proton acceptor in the catalytic mechanism. E143, E171, and H360 together coordinate Zn(2+).

Belongs to the peptidase M20A family. DapE subfamily. Homodimer. The cofactor is Zn(2+). Co(2+) serves as cofactor.

It catalyses the reaction N-succinyl-(2S,6S)-2,6-diaminopimelate + H2O = (2S,6S)-2,6-diaminopimelate + succinate. Its pathway is amino-acid biosynthesis; L-lysine biosynthesis via DAP pathway; LL-2,6-diaminopimelate from (S)-tetrahydrodipicolinate (succinylase route): step 3/3. Its function is as follows. Catalyzes the hydrolysis of N-succinyl-L,L-diaminopimelic acid (SDAP), forming succinate and LL-2,6-diaminopimelate (DAP), an intermediate involved in the bacterial biosynthesis of lysine and meso-diaminopimelic acid, an essential component of bacterial cell walls. The chain is Succinyl-diaminopimelate desuccinylase from Methylobacterium sp. (strain 4-46).